A 388-amino-acid polypeptide reads, in one-letter code: Formate-dependent phosphoribosylglycinamide formyltransferase (388 aa).

Residues glutamate 20–leucine 21 and glutamate 80 contribute to the N(1)-(5-phospho-beta-D-ribosyl)glycinamide site. ATP-binding positions include arginine 112, lysine 153, serine 158–glutamine 163, glutamate 193–valine 196, and glutamate 201. One can recognise an ATP-grasp domain in the interval arginine 117 to leucine 306. Residues glutamate 265 and glutamate 277 each contribute to the Mg(2+) site. N(1)-(5-phospho-beta-D-ribosyl)glycinamide-binding positions include aspartate 284, lysine 352, and arginine 359–arginine 360.

The protein belongs to the PurK/PurT family. Homodimer.

It carries out the reaction N(1)-(5-phospho-beta-D-ribosyl)glycinamide + formate + ATP = N(2)-formyl-N(1)-(5-phospho-beta-D-ribosyl)glycinamide + ADP + phosphate + H(+). Its pathway is purine metabolism; IMP biosynthesis via de novo pathway; N(2)-formyl-N(1)-(5-phospho-D-ribosyl)glycinamide from N(1)-(5-phospho-D-ribosyl)glycinamide (formate route): step 1/1. Functionally, involved in the de novo purine biosynthesis. Catalyzes the transfer of formate to 5-phospho-ribosyl-glycinamide (GAR), producing 5-phospho-ribosyl-N-formylglycinamide (FGAR). Formate is provided by PurU via hydrolysis of 10-formyl-tetrahydrofolate. The polypeptide is Formate-dependent phosphoribosylglycinamide formyltransferase (Methanococcus vannielii (strain ATCC 35089 / DSM 1224 / JCM 13029 / OCM 148 / SB)).